The primary structure comprises 291 residues: GCN5-related N-acetyltransferase 4, chloroplastic (291 aa).

The transit peptide at 1 to 61 (MRSTPLGTTA…PSQINSGACN (61 aa)) directs the protein to the chloroplast. The N-acetyltransferase domain occupies 76 to 280 (IVVREARLED…RFTFMMKLVN (205 aa)). Acetyl-CoA is bound by residues 199 to 201 (VAV) and 207 to 212 (RKGIAK). An N6-acetyllysine modification is found at Lys-217. Acetyl-CoA-binding positions include 238-240 (NLG) and Tyr-245. Tyr-245 acts as the Proton donor in catalysis. 2 positions are modified to N6-acetyllysine: Lys-254 and Lys-265.

This sequence belongs to the acetyltransferase family. GNAT subfamily. Oligomer. In terms of processing, autoacetylated at K-217, K-254 and K-265. As to expression, expressed in green tissues.

Its subcellular location is the plastid. The protein localises to the chloroplast. It carries out the reaction an N-terminal L-alpha-aminoacyl-[protein] + acetyl-CoA = N-terminal N(alpha)-acetyl-L-alpha-aminoacyl-[protein] + CoA + H(+). It catalyses the reaction L-lysyl-[protein] + acetyl-CoA = N(6)-acetyl-L-lysyl-[protein] + CoA + H(+). The enzyme catalyses N-terminal L-alanyl-[protein] + acetyl-CoA = N-terminal N(alpha)-acetyl-L-alanyl-[protein] + CoA + H(+). The catalysed reaction is N-terminal L-seryl-[protein] + acetyl-CoA = N-terminal N(alpha)-acetyl-L-seryl-[protein] + CoA + H(+). It carries out the reaction N-terminal L-threonyl-[protein] + acetyl-CoA = N-terminal N(alpha)-acetyl-L-threonyl-[protein] + CoA + H(+). It catalyses the reaction N-terminal L-methionyl-[protein] + acetyl-CoA = N-terminal N(alpha)-acetyl-L-methionyl-[protein] + CoA + H(+). The enzyme catalyses N-terminal L-valyl-[protein] + acetyl-CoA = N-terminal N(alpha)-acetyl-L-valyl-[protein] + CoA + H(+). The catalysed reaction is N-terminal glycyl-[protein] + acetyl-CoA = N-terminal N(alpha)-acetylglycyl-[protein] + CoA + H(+). Functionally, protein acetyltransferase with dual specificity triggering both N-alpha-acetylation (NTA), with a large spectrum of modified N-termini, including methionine, alanine, serine, threonine and to a lower extent glycine and valine as substrates, and epsilon-lysine acetylation (KA) of several plastid proteins. This Arabidopsis thaliana (Mouse-ear cress) protein is GCN5-related N-acetyltransferase 4, chloroplastic.